The primary structure comprises 997 residues: Protein translocase subunit SecA (997 aa).

Residues Gln102, 120 to 124, and Asp521 each bind ATP; that span reads GEGKT. Residues 893-997 are disordered; sequence PADASPNGVV…KYKKCHGAEA (105 aa). Basic and acidic residues predominate over residues 938 to 953; the sequence is AIEREFEKKKQQELSH. 4 residues coordinate Zn(2+): Cys981, Cys983, Cys992, and His993. Residues 987-997 are compositionally biased toward basic residues; sequence KKYKKCHGAEA.

It belongs to the SecA family. As to quaternary structure, monomer and homodimer. Part of the essential Sec protein translocation apparatus which comprises SecA, SecYEG and auxiliary proteins SecDF. Other proteins may also be involved. Requires Zn(2+) as cofactor.

Its subcellular location is the cell inner membrane. The protein resides in the cytoplasm. It carries out the reaction ATP + H2O + cellular proteinSide 1 = ADP + phosphate + cellular proteinSide 2.. In terms of biological role, part of the Sec protein translocase complex. Interacts with the SecYEG preprotein conducting channel. Has a central role in coupling the hydrolysis of ATP to the transfer of proteins into and across the cell membrane, serving as an ATP-driven molecular motor driving the stepwise translocation of polypeptide chains across the membrane. In Acidobacterium capsulatum (strain ATCC 51196 / DSM 11244 / BCRC 80197 / JCM 7670 / NBRC 15755 / NCIMB 13165 / 161), this protein is Protein translocase subunit SecA.